Consider the following 438-residue polypeptide: tRNA(Ile)-lysidine synthase (438 aa).

19–24 (SGGIDS) provides a ligand contact to ATP.

It belongs to the tRNA(Ile)-lysidine synthase family.

It localises to the cytoplasm. The enzyme catalyses cytidine(34) in tRNA(Ile2) + L-lysine + ATP = lysidine(34) in tRNA(Ile2) + AMP + diphosphate + H(+). In terms of biological role, ligates lysine onto the cytidine present at position 34 of the AUA codon-specific tRNA(Ile) that contains the anticodon CAU, in an ATP-dependent manner. Cytidine is converted to lysidine, thus changing the amino acid specificity of the tRNA from methionine to isoleucine. This chain is tRNA(Ile)-lysidine synthase, found in Buchnera aphidicola subsp. Baizongia pistaciae (strain Bp).